Reading from the N-terminus, the 738-residue chain is DNA topoisomerase 4 subunit A (738 aa).

Residues Leu-32–Gln-496 enclose the Topo IIA-type catalytic domain. The active-site O-(5'-phospho-DNA)-tyrosine intermediate is Tyr-120.

It belongs to the type II topoisomerase GyrA/ParC subunit family. ParC type 1 subfamily. As to quaternary structure, heterotetramer composed of ParC and ParE.

It localises to the cell membrane. The enzyme catalyses ATP-dependent breakage, passage and rejoining of double-stranded DNA.. Its function is as follows. Topoisomerase IV is essential for chromosome segregation. It relaxes supercoiled DNA. Performs the decatenation events required during the replication of a circular DNA molecule. The polypeptide is DNA topoisomerase 4 subunit A (Rickettsia prowazekii (strain Madrid E)).